The primary structure comprises 299 residues: ATP phosphoribosyltransferase (299 aa).

It belongs to the ATP phosphoribosyltransferase family. Long subfamily. Equilibrium between an active dimeric form, an inactive hexameric form and higher aggregates. Interconversion between the various forms is largely reversible and is influenced by the natural substrates and inhibitors of the enzyme. The cofactor is Mg(2+).

Its subcellular location is the cytoplasm. It catalyses the reaction 1-(5-phospho-beta-D-ribosyl)-ATP + diphosphate = 5-phospho-alpha-D-ribose 1-diphosphate + ATP. Its pathway is amino-acid biosynthesis; L-histidine biosynthesis; L-histidine from 5-phospho-alpha-D-ribose 1-diphosphate: step 1/9. Its activity is regulated as follows. Feedback inhibited by histidine. Functionally, catalyzes the condensation of ATP and 5-phosphoribose 1-diphosphate to form N'-(5'-phosphoribosyl)-ATP (PR-ATP). Has a crucial role in the pathway because the rate of histidine biosynthesis seems to be controlled primarily by regulation of HisG enzymatic activity. The sequence is that of ATP phosphoribosyltransferase from Escherichia coli O157:H7.